A 1891-amino-acid chain; its full sequence is MGPGWAGLLQDKGGGSPSVVMSDTDSDEESAGGGPFSLTGFLFGNINGAGQLEGESVLDDECKKHLAGLGALGLGSLITELTANEELSGSDGALVNDEGWIRSREDAVDYSDINEVAEDESRRYQQTMGSLQPLCHTDYDEDDYDADCEDIDCKLMPPPPPPPGPLKKEKDQDDITGVSEDGEGIILPSIIAPSSLASEKVDFSSSSDSESEMGPQDAAQSESKDGQLTLPLAGIMQHDATKLLPSVTELFPEFRPGKVLRFLRLFGPGKNVPSVWRSARRKRKKKHRELIQEGQVQEEECSVELEVNQKSLWNYDYAPPPLPDQCLSDDEITMMAPVESKFSQSTGDTDKVMDTKPRVAEWRYGPARLWYDMLGVPEDGSGFDYGFKMKKTEHESTIKCNIMKKLRKLEENSGVDLLADENFLMVTQLHWEDDIIWDGEDVKHKGTKPQRASLAGWLPSSMTRNAMAYNVQQGFTATLDDDKPWYSIFPIDNEDLVYGRWEDNIIWDAQNMPRILEPPVLTLDPNDENLILEIPDEKEEATSNSPSKENKKESSLKKSRILLGKTGVIKEEPQQNMSQPEVKDPWNLSNDEYYYPKQQGLRGTFGGNIIQHSIPAVELRQPFFPTHMGPIKLRQFHRPPLKKYSFGALSQPGPHSVQPLLKHIKKKAKMREQERQASGGGEMFFMRTPQDLTGKDGDLILAEYSEENGPLMMQVGMATKIKNYYKRKPGKDPGAPDCKYGETVYCHTSPFLGSLHPGQLLQAFENNLFRAPIYLHKMPESDFLIIRTRQGYFIRELVDIFVVGQQCPLFEVPGPNSKRANTHIRDFLQVFIYRLFWKSKDRPRRIRMEDIKKAFPSHSESSIRKRLKLCADFKRTGMDSNWWVLKSDFRLPTEEEIRAMVSPEQCCAYYSMIAAEQRLKDAGYGEKSFFAPEEENEEDFQMKIDDEVRTAPWNTTRAFIAAMKGKCLLEVTGVADPTGCGEGFSYVKIPNKPTQQKDDKEPQPVKKTVTGTDADLRRLSLKNAKQLLRKFGVPEEEIKKLSRWEVIDVVRTMSTEQARSGEGPMSKFARGSRFSVAEHQERYKEECQRIFDLQNKVLSSTEVLSTDTDSSSAEDSDFEEMGKNIENMLQNKKTSSQLSREREEQERKELQRMLLAAGSAAAGNNHRDDDTASVTSLNSSATGRCLKIYRTFRDEEGKEYVRCETVRKATVIDAYVRIRTTKDEEFIRKFALFDEQHREEMRKERRRIQEQLRRLKRNQEKEKLKGPPEKKPKKMKERPDLKLKCGACGAIGHMRTNKFCPLYYQTNAPPSNPVAMTEEQEEELEKTVIHNDNEELIKVEGTKIVLGKQLIESADEVRRKSLVLKFPKQQLPPKKKRRVGTTVHCDYLNRPHKSIHRRRTDPMVTLSSILESIINDMRDLPNTYPFHTPVNAKVVKDYYKIITRPMDLQTLRENVRKRLYPSREEFREHLELIVKNSATYNGPKHSLTQISQSMLDLCDEKLKEKEDKLARLEKAINPLLDDDDQVAFSFILDNIVTQKMMAVPDSWPFHHPVNKKFVPDYYKVIVSPMDLETIRKNISKHKYQSRESFLDDVNLILANSVKYNGPESQYTKTAQEIVNVCHQTLTEYDEHLTQLEKDICTAKEAALEEAELESLDPMTPGPYTPQPPDLYDNNTSLSVSRDASVYQDESNLSVLDIPSATSEKQLTQEGGDGDGDLADEEEGTVQQPQASVLYEDLLMSEGEDDEEDAGSDEEGDNPFFAIQLSESGSDSDVESGSLRPKQPRVLQENTRMGMENEESMMSYEGDGGDASRGLEDSNISYGSYEEPDPKSNTQDTSFSSIGGYEVSEEEEDEEEQRSGPSVLSQVHLSEDEEDSEDFHSIAGDTDLDSDE.

3 disordered regions span residues 1–34 (MGPG…AGGG), 154–180 (KLMP…GVSE), and 197–224 (ASEK…SESK). The Protein kinase 1 domain maps to 1 to 435 (MGPGWAGLLQ…VTQLHWEDDI (435 aa)). Pro residues predominate over residues 156–165 (MPPPPPPPGP). Residues 197–208 (ASEKVDFSSSSD) are compositionally biased toward low complexity. Residue Ser328 is modified to Phosphoserine; by autocatalysis. Positions 535–556 (PDEKEEATSNSPSKENKKESSL) are disordered. The histone acetyltransferase (HAT) stretch occupies residues 538-997 (KEEATSNSPS…KIPNKPTQQK (460 aa)). N6-acetyllysine is present on Lys565. Glycyl lysine isopeptide (Lys-Gly) (interchain with G-Cter in SUMO2) cross-links involve residues Lys570 and Lys583. Disordered regions lie at residues 990-1009 (PNKP…KKTV), 1128-1148 (MLQN…QERK), and 1254-1278 (RLKR…MKER). Composition is skewed to basic and acidic residues over residues 995 to 1004 (QQKDDKEPQP), 1139 to 1148 (SREREEQERK), and 1254 to 1270 (RLKR…PPEK). Positions 1216–1294 (VRIRTTKDEE…CGACGAIGHM (79 aa)) form a DNA-binding region, HMG box. The segment at 1363–1650 (VLKFPKQQLP…TAKEAALEEA (288 aa)) is interaction with ASF1A and ASF1B. Residues 1372 to 1379 (PPKKKRRV) carry the Nuclear localization signal motif. 2 Bromo domains span residues 1397–1505 (RRRT…LKEK) and 1519–1628 (LLDD…LTEY). The region spanning 1446–1891 (MDLQTLRENV…AGDTDLDSDE (446 aa)) is the Protein kinase 2 domain. Disordered stretches follow at residues 1651–1676 (ELES…NNTS) and 1690–1891 (SNLS…DSDE). The span at 1659–1668 (TPGPYTPQPP) shows a compositional bias: pro residues. Residues Ser1690 and Ser1693 each carry the phosphoserine modification. Polar residues predominate over residues 1690 to 1708 (SNLSVLDIPSATSEKQLTQ). 2 stretches are compositionally biased toward acidic residues: residues 1711-1723 (GDGD…EEEG) and 1741-1756 (EGED…EEGD). Residues 1764-1778 (LSESGSDSDVESGSL) show a composition bias toward low complexity. Ser1799, Ser1802, and Ser1820 each carry phosphoserine. A compositionally biased stretch (polar residues) spans 1830–1840 (KSNTQDTSFSS). Residues 1846 to 1855 (VSEEEEDEEE) show a composition bias toward acidic residues. The residue at position 1847 (Ser1847) is a Phosphoserine. A compositionally biased stretch (polar residues) spans 1858-1867 (SGPSVLSQVH).

It belongs to the TAF1 family. Component of the TFIID basal transcription factor complex, composed of TATA-box-binding protein TBP, and a number of TBP-associated factors (TAFs). TFIID consists of at least TBP, TAF1, TAF2, TAF3, TAF4, TAF5, TAF6, TAF7, TAF8, TAF9, TAF10, TAF11, TAF12 and TAF13. Interacts with TAF7; the interaction is direct. TAF1, when part of the TFIID complex, interacts with C-terminus of TP53. Part of a TFIID-containing RNA polymerase II pre-initiation complex that is composed of TBP and at least GTF2A1, GTF2A2, GTF2E1, GTF2E2, GTF2F1, GTF2H2, GTF2H3, GTF2H4, GTF2H5, GTF2B, TCEA1, ERCC2, ERCC3, TAF1, TAF2, TAF3, TAF4, TAF5, TAF6, TAF7, TAF8, TAF9, TAF10, TAF11, TAF12 and TAF13. Component of some MLL1/MLL complex, at least composed of the core components KMT2A/MLL1, ASH2L, HCFC1/HCF1, WDR5 and RBBP5, as well as the facultative components BACC1, CHD8, E2F6, HSP70, INO80C, KANSL1, LAS1L, MAX, MCRS1, MGA, KAT8/MOF, PELP1, PHF20, PRP31, RING2, RUVB1/TIP49A, RUVB2/TIP49B, SENP3, TAF1, TAF4, TAF6, TAF7, TAF9 and TEX10. RB1 interacts with the N-terminal domain of TAF1. Interacts with ASF1A and ASF1B. Interacts (via bromo domains) with acetylated lysine residues on the N-terminus of histone H1.4, H2A, H2B, H3 and H4 (in vitro). It depends on Mg(2+) as a cofactor. Post-translationally, phosphorylated by casein kinase II in vitro.

The protein localises to the nucleus. It catalyses the reaction L-seryl-[protein] + ATP = O-phospho-L-seryl-[protein] + ADP + H(+). The catalysed reaction is L-threonyl-[protein] + ATP = O-phospho-L-threonyl-[protein] + ADP + H(+). The enzyme catalyses L-lysyl-[protein] + acetyl-CoA = N(6)-acetyl-L-lysyl-[protein] + CoA + H(+). With respect to regulation, autophosphorylates on Ser residues. Inhibited by retinoblastoma tumor suppressor protein, RB1. Binding to TAF1 or CIITA inhibits the histone acetyltransferase activity. Functionally, the TFIID basal transcription factor complex plays a major role in the initiation of RNA polymerase II (Pol II)-dependent transcription. TFIID recognizes and binds promoters with or without a TATA box via its subunit TBP, a TATA-box-binding protein, and promotes assembly of the pre-initiation complex (PIC). The TFIID complex consists of TBP and TBP-associated factors (TAFs), including TAF1, TAF2, TAF3, TAF4, TAF5, TAF6, TAF7, TAF8, TAF9, TAF10, TAF11, TAF12 and TAF13. TAF1 is the largest component and core scaffold of the TFIID complex, involved in nucleating complex assembly. TAF1 forms a promoter DNA binding subcomplex of TFIID, together with TAF7 and TAF2. Contains novel N- and C-terminal Ser/Thr kinase domains which can autophosphorylate or transphosphorylate other transcription factors. Phosphorylates TP53 on 'Thr-55' which leads to MDM2-mediated degradation of TP53. Phosphorylates GTF2A1 and GTF2F1 on Ser residues. Possesses DNA-binding activity. Exhibits histone acetyltransferase activity towards histones H3 and H4. Essential for progression of the G1 phase of the cell cycle. This is Transcription initiation factor TFIID subunit 1 from Mus musculus (Mouse).